Reading from the N-terminus, the 349-residue chain is Hydroxymethylglutaryl-CoA synthase (349 aa).

Residues Asp-30 and Ala-31 each coordinate (3S)-3-hydroxy-3-methylglutaryl-CoA. Glu-82 serves as the catalytic Proton donor/acceptor. (3S)-3-hydroxy-3-methylglutaryl-CoA contacts are provided by Cys-114 and Thr-155. Cys-114 functions as the Acyl-thioester intermediate in the catalytic mechanism. Arg-203 is a CoA binding site. Thr-205 and His-238 together coordinate (3S)-3-hydroxy-3-methylglutaryl-CoA. Residue His-238 is the Proton donor/acceptor of the active site. Position 243 (Lys-243) interacts with CoA. (3S)-3-hydroxy-3-methylglutaryl-CoA contacts are provided by Asn-270 and Ser-300.

It belongs to the thiolase-like superfamily. Archaeal HMG-CoA synthase family. Interacts with acetoacetyl-CoA thiolase that catalyzes the precedent step in the pathway and with a DUF35 protein. The acetoacetyl-CoA thiolase/HMG-CoA synthase complex channels the intermediate via a fused CoA-binding site, which allows for efficient coupling of the endergonic thiolase reaction with the exergonic HMGCS reaction.

It carries out the reaction acetoacetyl-CoA + acetyl-CoA + H2O = (3S)-3-hydroxy-3-methylglutaryl-CoA + CoA + H(+). Its pathway is metabolic intermediate biosynthesis; (R)-mevalonate biosynthesis; (R)-mevalonate from acetyl-CoA: step 2/3. Its function is as follows. Catalyzes the condensation of acetyl-CoA with acetoacetyl-CoA to form 3-hydroxy-3-methylglutaryl-CoA (HMG-CoA). Functions in the mevalonate (MVA) pathway leading to isopentenyl diphosphate (IPP), a key precursor for the biosynthesis of isoprenoid compounds that are building blocks of archaeal membrane lipids. The chain is Hydroxymethylglutaryl-CoA synthase from Methanococcus maripaludis (strain C5 / ATCC BAA-1333).